Reading from the N-terminus, the 802-residue chain is E3 ubiquitin-protein ligase RNF10 (802 aa).

3 stretches are compositionally biased toward low complexity: residues 1 to 31 (MPQSSPSTAATASDMDKNSGSNSSSASSGSS), 78 to 90 (SNQSRRSNSQKSK), and 104 to 113 (SKPFSSSSNG). The segment at 1 to 134 (MPQSSPSTAA…AEFSPAQFSG (134 aa)) is disordered. S5 is subject to Phosphoserine. Phosphoserine is present on S110. The span at 114-124 (GRRDEVAEAQR) shows a compositional bias: basic and acidic residues. At S128 the chain carries Phosphoserine. Residues 225-267 (CPICLYPPTAAKITRCGHIFCWACILHYLSLSERTWSKCPICY) form an RING-type zinc finger. Positions 645–654 (DSALGPTSTE) are enriched in polar residues. Disordered regions lie at residues 645–664 (DSALGPTSTEGHGALSLSPL), 716–753 (DGWPKAAPKKDDNSLAPPAPVDSDGESDNSDRVPVPSF), and 767–802 (KLDTPATSDPLSDRGGRKRKRQKQKLLFSTSVVHTK). Over residues 716–728 (DGWPKAAPKKDDN) the composition is skewed to basic and acidic residues. A compositionally biased stretch (polar residues) spans 793–802 (LFSTSVVHTK).

Belongs to the RNF10 family. As to quaternary structure, interacts with MEOX2.

The protein resides in the cytoplasm. Its subcellular location is the nucleus. It carries out the reaction S-ubiquitinyl-[E2 ubiquitin-conjugating enzyme]-L-cysteine + [acceptor protein]-L-lysine = [E2 ubiquitin-conjugating enzyme]-L-cysteine + N(6)-ubiquitinyl-[acceptor protein]-L-lysine.. It functions in the pathway protein modification; protein ubiquitination. Functionally, E3 ubiquitin-protein ligase that catalyzes monoubiquitination of 40S ribosomal proteins RPS2/us5 and RPS3/us3 in response to ribosome stalling. Part of a ribosome quality control that takes place when ribosomes have stalled during translation initiation (iRQC): RNF10 acts by mediating monoubiquitination of RPS2/us5 and RPS3/us3, promoting their degradation by the proteasome. Also promotes ubiquitination of 40S ribosomal proteins in response to ribosome stalling during translation elongation. The action of RNF10 in iRQC is counteracted by USP10. May also act as a transcriptional factor involved in the regulation of MAG (Myelin-associated glycoprotein) expression. Acts as a regulator of Schwann cell differentiation and myelination. This chain is E3 ubiquitin-protein ligase RNF10, found in Rattus norvegicus (Rat).